A 105-amino-acid polypeptide reads, in one-letter code: Guanidinium exporter (105 aa).

Residues 1-21 form a helical membrane-spanning segment; it reads MSWIILVIAGLLEVVWAVGLK. Over 22 to 28 the chain is Cytoplasmic; the sequence is YTHGFSR. The helical transmembrane segment at 29–49 threads the bilayer; that stretch reads LTPSVITVTAMIVSMALLAWA. At 50–57 the chain is on the periplasmic side; that stretch reads MKSLPVGT. The helical transmembrane segment at 58–78 threads the bilayer; sequence AYAVWTGIGAVGAAITGIVLL. Residues 79–81 lie on the Cytoplasmic side of the membrane; that stretch reads GES. The chain crosses the membrane as a helical span at residues 82–102; it reads ANPMRLASLALIVLGIIGLKL. The Periplasmic segment spans residues 103 to 105; sequence STH.

It belongs to the drug/metabolite transporter (DMT) superfamily. Small multidrug resistance (SMR) (TC 2.A.7.1) family. Gdx/SugE subfamily.

The protein resides in the cell inner membrane. In terms of biological role, guanidinium ion exporter. Couples guanidinium export to the proton motive force, exchanging one guanidinium ion for two protons. In Escherichia coli O157:H7, this protein is Guanidinium exporter.